The primary structure comprises 335 residues: Glycerol-3-phosphate dehydrogenase [NAD(P)+] (335 aa).

Residues serine 12, tryptophan 13, and lysine 107 each contribute to the NADPH site. Sn-glycerol 3-phosphate is bound by residues lysine 107, glycine 138, and serine 140. Alanine 142 lines the NADPH pocket. Positions 193, 246, 256, 257, and 258 each coordinate sn-glycerol 3-phosphate. Lysine 193 (proton acceptor) is an active-site residue. Arginine 257 serves as a coordination point for NADPH. Valine 281 and glutamate 283 together coordinate NADPH.

Belongs to the NAD-dependent glycerol-3-phosphate dehydrogenase family.

It is found in the cytoplasm. It catalyses the reaction sn-glycerol 3-phosphate + NAD(+) = dihydroxyacetone phosphate + NADH + H(+). The enzyme catalyses sn-glycerol 3-phosphate + NADP(+) = dihydroxyacetone phosphate + NADPH + H(+). It functions in the pathway membrane lipid metabolism; glycerophospholipid metabolism. Catalyzes the reduction of the glycolytic intermediate dihydroxyacetone phosphate (DHAP) to sn-glycerol 3-phosphate (G3P), the key precursor for phospholipid synthesis. In Geobacter sulfurreducens (strain ATCC 51573 / DSM 12127 / PCA), this protein is Glycerol-3-phosphate dehydrogenase [NAD(P)+].